Reading from the N-terminus, the 325-residue chain is NADH-quinone oxidoreductase subunit H (325 aa).

Transmembrane regions (helical) follow at residues 11-31, 50-69, 81-101, 114-134, 154-174, 186-206, 237-257, 265-285, and 304-324; these read ILLTVLKAVVILLVVVTCGAF, SRVGWGGSLQLVADMIKMFF, LIFTLAPMIAFCSLLLSFAIV, IGILFFLMMAGLAVYAVLFAG, LSYEVFLGLSLMGVVAQAGSF, LWNIIPQFFGFLTFIIAGVAV, FFVGEYIGIVTISALIVTLFF, LPPFIWFAIKTAFFMVMFILV, and ICLPLTLINLLVTAAVILYHA.

This sequence belongs to the complex I subunit 1 family. In terms of assembly, NDH-1 is composed of 13 different subunits. Subunits NuoA, H, J, K, L, M, N constitute the membrane sector of the complex.

Its subcellular location is the cell inner membrane. The catalysed reaction is a quinone + NADH + 5 H(+)(in) = a quinol + NAD(+) + 4 H(+)(out). NDH-1 shuttles electrons from NADH, via FMN and iron-sulfur (Fe-S) centers, to quinones in the respiratory chain. The immediate electron acceptor for the enzyme in this species is believed to be ubiquinone. Couples the redox reaction to proton translocation (for every two electrons transferred, four hydrogen ions are translocated across the cytoplasmic membrane), and thus conserves the redox energy in a proton gradient. This subunit may bind ubiquinone. The protein is NADH-quinone oxidoreductase subunit H of Edwardsiella ictaluri (strain 93-146).